The sequence spans 434 residues: Tol-Pal system protein TolB (434 aa).

The signal sequence occupies residues 1–21; the sequence is MTVRRALALAALALAVSPALA. The tract at residues 411–434 is disordered; sequence GDRQTPVTSGKTDLAAPAWGPLAP.

It belongs to the TolB family. In terms of assembly, the Tol-Pal system is composed of five core proteins: the inner membrane proteins TolA, TolQ and TolR, the periplasmic protein TolB and the outer membrane protein Pal. They form a network linking the inner and outer membranes and the peptidoglycan layer.

The protein resides in the periplasm. In terms of biological role, part of the Tol-Pal system, which plays a role in outer membrane invagination during cell division and is important for maintaining outer membrane integrity. The sequence is that of Tol-Pal system protein TolB from Anaeromyxobacter dehalogenans (strain 2CP-1 / ATCC BAA-258).